Here is a 266-residue protein sequence, read N- to C-terminus: Tryptophan synthase alpha chain (266 aa).

Active-site proton acceptor residues include Glu46 and Asp57.

This sequence belongs to the TrpA family. In terms of assembly, tetramer of two alpha and two beta chains.

It carries out the reaction (1S,2R)-1-C-(indol-3-yl)glycerol 3-phosphate + L-serine = D-glyceraldehyde 3-phosphate + L-tryptophan + H2O. The protein operates within amino-acid biosynthesis; L-tryptophan biosynthesis; L-tryptophan from chorismate: step 5/5. In terms of biological role, the alpha subunit is responsible for the aldol cleavage of indoleglycerol phosphate to indole and glyceraldehyde 3-phosphate. In Lacticaseibacillus casei (Lactobacillus casei), this protein is Tryptophan synthase alpha chain.